The chain runs to 225 residues: 7-carboxy-7-deazaguanine synthase (225 aa).

Residues 14-16 and R29 each bind substrate; that span reads LQG. The Radical SAM core domain occupies 20–225; the sequence is HFGKSAFFIR…LQTHKWLGVL (206 aa). [4Fe-4S] cluster is bound by residues C33, C37, and C40. T42 is a Mg(2+) binding site. Residue T77 participates in substrate binding. S-adenosyl-L-methionine contacts are provided by residues G79 and 127–129; that span reads SPK.

The protein belongs to the radical SAM superfamily. 7-carboxy-7-deazaguanine synthase family. In terms of assembly, homodimer. [4Fe-4S] cluster serves as cofactor. S-adenosyl-L-methionine is required as a cofactor. The cofactor is Mg(2+).

The catalysed reaction is 6-carboxy-5,6,7,8-tetrahydropterin + H(+) = 7-carboxy-7-deazaguanine + NH4(+). It functions in the pathway purine metabolism; 7-cyano-7-deazaguanine biosynthesis. Its function is as follows. Catalyzes the complex heterocyclic radical-mediated conversion of 6-carboxy-5,6,7,8-tetrahydropterin (CPH4) to 7-carboxy-7-deazaguanine (CDG), a step common to the biosynthetic pathways of all 7-deazapurine-containing compounds. The chain is 7-carboxy-7-deazaguanine synthase from Prochlorococcus marinus (strain SARG / CCMP1375 / SS120).